The chain runs to 148 residues: Large ribosomal subunit protein bL9 (148 aa).

It belongs to the bacterial ribosomal protein bL9 family.

Functionally, binds to the 23S rRNA. The sequence is that of Large ribosomal subunit protein bL9 from Listeria innocua serovar 6a (strain ATCC BAA-680 / CLIP 11262).